Here is a 264-residue protein sequence, read N- to C-terminus: MSSIHPTAVIGSGATIGEDVQIGPYTVIDDDVVIGDRTVIAPHVYIADGARIGSECRIHSGAVLSTAPQDLKYAGEKTELYVGDRTVIRECVTLNRGTKASGKTVVGSDNLLMAYVHAGHDCVIGNHVVIANSVQFGGHCEVGDYVVVGGLAGIHQFVRIGRYAMVGGISRGALDVPPFVMAGGHNSFRYEGLNVIGLKRRGFTSEQISTIRDVYRVIFQSGLLLSNALEAVRRDFEQTPEVKEILGFFASGAHGRKFLKPFNS.

This sequence belongs to the transferase hexapeptide repeat family. LpxA subfamily. Homotrimer.

The protein resides in the cytoplasm. It catalyses the reaction a (3R)-hydroxyacyl-[ACP] + UDP-N-acetyl-alpha-D-glucosamine = a UDP-3-O-[(3R)-3-hydroxyacyl]-N-acetyl-alpha-D-glucosamine + holo-[ACP]. Its pathway is glycolipid biosynthesis; lipid IV(A) biosynthesis; lipid IV(A) from (3R)-3-hydroxytetradecanoyl-[acyl-carrier-protein] and UDP-N-acetyl-alpha-D-glucosamine: step 1/6. Its function is as follows. Involved in the biosynthesis of lipid A, a phosphorylated glycolipid that anchors the lipopolysaccharide to the outer membrane of the cell. This Chlorobaculum parvum (strain DSM 263 / NCIMB 8327) (Chlorobium vibrioforme subsp. thiosulfatophilum) protein is Acyl-[acyl-carrier-protein]--UDP-N-acetylglucosamine O-acyltransferase.